A 308-amino-acid polypeptide reads, in one-letter code: 4-hydroxy-3-methylbut-2-enyl diphosphate reductase (308 aa).

[4Fe-4S] cluster is bound at residue C13. 2 residues coordinate (2E)-4-hydroxy-3-methylbut-2-enyl diphosphate: H42 and H75. Dimethylallyl diphosphate is bound by residues H42 and H75. The isopentenyl diphosphate site is built by H42 and H75. C97 is a [4Fe-4S] cluster binding site. (2E)-4-hydroxy-3-methylbut-2-enyl diphosphate is bound at residue H125. A dimethylallyl diphosphate-binding site is contributed by H125. H125 serves as a coordination point for isopentenyl diphosphate. E127 (proton donor) is an active-site residue. T165 lines the (2E)-4-hydroxy-3-methylbut-2-enyl diphosphate pocket. C195 contributes to the [4Fe-4S] cluster binding site. Residues S223, S224, N225, and S267 each coordinate (2E)-4-hydroxy-3-methylbut-2-enyl diphosphate. Residues S223, S224, N225, and S267 each contribute to the dimethylallyl diphosphate site. Residues S223, S224, N225, and S267 each contribute to the isopentenyl diphosphate site.

It belongs to the IspH family. The cofactor is [4Fe-4S] cluster.

It catalyses the reaction isopentenyl diphosphate + 2 oxidized [2Fe-2S]-[ferredoxin] + H2O = (2E)-4-hydroxy-3-methylbut-2-enyl diphosphate + 2 reduced [2Fe-2S]-[ferredoxin] + 2 H(+). It carries out the reaction dimethylallyl diphosphate + 2 oxidized [2Fe-2S]-[ferredoxin] + H2O = (2E)-4-hydroxy-3-methylbut-2-enyl diphosphate + 2 reduced [2Fe-2S]-[ferredoxin] + 2 H(+). It participates in isoprenoid biosynthesis; dimethylallyl diphosphate biosynthesis; dimethylallyl diphosphate from (2E)-4-hydroxy-3-methylbutenyl diphosphate: step 1/1. It functions in the pathway isoprenoid biosynthesis; isopentenyl diphosphate biosynthesis via DXP pathway; isopentenyl diphosphate from 1-deoxy-D-xylulose 5-phosphate: step 6/6. In terms of biological role, catalyzes the conversion of 1-hydroxy-2-methyl-2-(E)-butenyl 4-diphosphate (HMBPP) into a mixture of isopentenyl diphosphate (IPP) and dimethylallyl diphosphate (DMAPP). Acts in the terminal step of the DOXP/MEP pathway for isoprenoid precursor biosynthesis. The chain is 4-hydroxy-3-methylbut-2-enyl diphosphate reductase from Chlamydia muridarum (strain MoPn / Nigg).